A 104-amino-acid chain; its full sequence is Small ribosomal subunit protein uS10 (104 aa).

This sequence belongs to the universal ribosomal protein uS10 family. In terms of assembly, part of the 30S ribosomal subunit.

Functionally, involved in the binding of tRNA to the ribosomes. The sequence is that of Small ribosomal subunit protein uS10 from Maricaulis maris (strain MCS10) (Caulobacter maris).